The primary structure comprises 539 residues: Chaperonin GroEL (539 aa).

ATP is bound by residues 29 to 32 (TLGP), 86 to 90 (DGTTT), Gly-413, 476 to 478 (NAA), and Asp-492.

It belongs to the chaperonin (HSP60) family. Forms a cylinder of 14 subunits composed of two heptameric rings stacked back-to-back. Interacts with the co-chaperonin GroES.

The protein localises to the cytoplasm. It carries out the reaction ATP + H2O + a folded polypeptide = ADP + phosphate + an unfolded polypeptide.. Together with its co-chaperonin GroES, plays an essential role in assisting protein folding. The GroEL-GroES system forms a nano-cage that allows encapsulation of the non-native substrate proteins and provides a physical environment optimized to promote and accelerate protein folding. The chain is Chaperonin GroEL from Geobacillus sp. (strain WCH70).